A 554-amino-acid chain; its full sequence is MFS-type transporter tstD (554 aa).

Composition is skewed to polar residues over residues Met-1 to Pro-10 and Gln-27 to Ser-38. The disordered stretch occupies residues Met-1–Val-68. N-linked (GlcNAc...) asparagine glycosylation is present at Asn-6. Residues Ser-39–Asn-48 show a composition bias toward basic and acidic residues. The helical transmembrane segment at Leu-76–Tyr-96 threads the bilayer. 2 N-linked (GlcNAc...) asparagine glycosylation sites follow: Asn-107 and Asn-114. Transmembrane regions (helical) follow at residues Leu-115–Ser-135, Pro-142–Asn-162, Leu-173–Ile-193, Ile-202–Leu-222, and Trp-231–Phe-251. Residues Lys-281 to Arg-300 are disordered. A run of 3 helical transmembrane segments spans residues Val-311–Phe-331, Ile-354–Thr-374, and Ile-413–Thr-433. N-linked (GlcNAc...) asparagine glycosylation occurs at Asn-437. 3 consecutive transmembrane segments (helical) span residues Ile-442 to Leu-462, Met-473 to Ile-493, and Trp-504 to Met-524.

The protein belongs to the major facilitator superfamily.

The protein resides in the membrane. MFS-type transporter; part of the gene cluster that mediates the biosynthesis of the antihypercholesterolemic agents phomoidrides which are dimeric anhydrides. The sequence is that of MFS-type transporter tstD from Talaromyces stipitatus (strain ATCC 10500 / CBS 375.48 / QM 6759 / NRRL 1006) (Penicillium stipitatum).